A 259-amino-acid chain; its full sequence is Protein odd-skipped-related 1 (259 aa).

3 C2H2-type zinc fingers span residues 168 to 190 (FVCKFCGRHFTKSYNLLIHERTH), 196 to 218 (YTCDICHKAFRRQDHLRDHRYIH), and 224 to 246 (FKCQECGKGFCQSRTLAVHKTLH).

It belongs to the Odd C2H2-type zinc-finger protein family. At early gastrula stage, expressed in the involuting mesoderm and endoderm. During neurulation, expressed in the pronephric primordium, following expression of osr2. During tailbud (stage 35), expressed in the rectal diverticulum and in the kidney ducts.

The protein localises to the nucleus. Transcriptional repressor. Required for pronephric kidney development. This Xenopus laevis (African clawed frog) protein is Protein odd-skipped-related 1.